Reading from the N-terminus, the 165-residue chain is Nucleotide-binding protein Chy400_2003 (165 aa).

Belongs to the YajQ family.

Its function is as follows. Nucleotide-binding protein. This Chloroflexus aurantiacus (strain ATCC 29364 / DSM 637 / Y-400-fl) protein is Nucleotide-binding protein Chy400_2003.